Consider the following 279-residue polypeptide: Diaminopimelate epimerase (279 aa).

Substrate contacts are provided by asparagine 13, glutamine 46, and asparagine 66. The active-site Proton donor is the cysteine 75. Substrate contacts are provided by residues glycine 76 to asparagine 77, asparagine 161, asparagine 194, and glutamate 212 to arginine 213. Cysteine 221 acts as the Proton acceptor in catalysis. Position 222 to 223 (glycine 222 to threonine 223) interacts with substrate.

Belongs to the diaminopimelate epimerase family. In terms of assembly, homodimer.

It localises to the cytoplasm. It catalyses the reaction (2S,6S)-2,6-diaminopimelate = meso-2,6-diaminopimelate. It functions in the pathway amino-acid biosynthesis; L-lysine biosynthesis via DAP pathway; DL-2,6-diaminopimelate from LL-2,6-diaminopimelate: step 1/1. Its function is as follows. Catalyzes the stereoinversion of LL-2,6-diaminopimelate (L,L-DAP) to meso-diaminopimelate (meso-DAP), a precursor of L-lysine and an essential component of the bacterial peptidoglycan. The polypeptide is Diaminopimelate epimerase (Alkalilimnicola ehrlichii (strain ATCC BAA-1101 / DSM 17681 / MLHE-1)).